A 96-amino-acid polypeptide reads, in one-letter code: Co-chaperonin GroES (96 aa).

This sequence belongs to the GroES chaperonin family. In terms of assembly, heptamer of 7 subunits arranged in a ring. Interacts with the chaperonin GroEL.

Its subcellular location is the cytoplasm. Together with the chaperonin GroEL, plays an essential role in assisting protein folding. The GroEL-GroES system forms a nano-cage that allows encapsulation of the non-native substrate proteins and provides a physical environment optimized to promote and accelerate protein folding. GroES binds to the apical surface of the GroEL ring, thereby capping the opening of the GroEL channel. The chain is Co-chaperonin GroES from Shewanella frigidimarina (strain NCIMB 400).